Consider the following 128-residue polypeptide: Large ribosomal subunit protein bL20c (128 aa).

The protein belongs to the bacterial ribosomal protein bL20 family.

Its subcellular location is the plastid. The protein resides in the chloroplast. Its function is as follows. Binds directly to 23S ribosomal RNA and is necessary for the in vitro assembly process of the 50S ribosomal subunit. It is not involved in the protein synthesizing functions of that subunit. The polypeptide is Large ribosomal subunit protein bL20c (Daucus carota (Wild carrot)).